Here is a 345-residue protein sequence, read N- to C-terminus: MPIATPEIYAEMLRRAKENSYAFPAINCTSSETVNAAIKGFADAGSDGIIQFSTGGAEFASGLGVKDMVTGAVALAKFTHTIAAKYPINVALHTDHCPKDKLDSYVRPLLAISARRVATGKDPLFGSHMWDGSAIPIDENLAIAQDLLKDAAAAKIILEVEIGVVGGEEDGVAGEINEKLYTTPKDFVKTIDALGAGEHGKYLLAATFGNVHGVYKPGNVKLRPDILAEGQKVAAAKLSQSEGSKPFDFVFHGGSGSEKSEIEEALRYGVVKMNVDTDTQYAFTRPVSGHMFTNYDGVLKVDGDVGNKKVYDPRSYLKKAEASMTERVLEACNDLRCAGKSVAAS.

Residue Ser-53 coordinates D-glyceraldehyde 3-phosphate. Residue Asp-95 is the Proton donor of the active site. Zn(2+)-binding residues include His-96, Asp-131, Glu-161, and His-212. Dihydroxyacetone phosphate is bound at residue Gly-213. His-252 lines the Zn(2+) pocket. Dihydroxyacetone phosphate contacts are provided by residues 253–255 (GGS) and 274–277 (NVDT).

The protein belongs to the class II fructose-bisphosphate aldolase family. Zn(2+) is required as a cofactor.

It catalyses the reaction beta-D-fructose 1,6-bisphosphate = D-glyceraldehyde 3-phosphate + dihydroxyacetone phosphate. The protein operates within carbohydrate degradation; glycolysis; D-glyceraldehyde 3-phosphate and glycerone phosphate from D-glucose: step 4/4. In terms of biological role, catalyzes the aldol condensation of dihydroxyacetone phosphate (DHAP or glycerone-phosphate) with glyceraldehyde 3-phosphate (G3P) to form fructose 1,6-bisphosphate (FBP) in gluconeogenesis and the reverse reaction in glycolysis. The polypeptide is Fructose-bisphosphate aldolase (fba) (Mycobacterium leprae (strain TN)).